The sequence spans 616 residues: Prolactin receptor (616 aa).

The first 24 residues, 1–24, serve as a signal peptide directing secretion; it reads MKENVASMIVFLLLLFLNIRLLKG. The Extracellular portion of the chain corresponds to 25-234; the sequence is QSPPGKPFIF…QIPNDFTMKD (210 aa). 2 consecutive Fibronectin type-III domains span residues 27–128 and 129–229; these read PPGK…VEPD and PPVN…IPND. An intrachain disulfide couples cysteine 36 to cysteine 46. The N-linked (GlcNAc...) asparagine glycan is linked to asparagine 59. An intrachain disulfide couples cysteine 75 to cysteine 86. N-linked (GlcNAc...) asparagine glycosylation is found at asparagine 104 and asparagine 132. Aspartate 211 and histidine 212 together coordinate Zn(2+). The WSXWS motif motif lies at 215-219; it reads WSVWS. A helical transmembrane segment spans residues 235–258; that stretch reads ITVWIFVAVLSTIICLIMVWAVAL. Residues 259–616 are Cytoplasmic-facing; that stretch reads KGYSMVTCIF…DPACFMHSLH (358 aa). A Box 1 motif motif is present at residues 267–275; that stretch reads IFPPVPGPK. 3 disordered regions span residues 326-375, 454-492, and 568-593; these read MPAH…STFH, QSSK…PKEK, and ESTK…STAP. A compositionally biased stretch (basic and acidic residues) spans 463–482; the sequence is GEEKATKQREVESSHSKAEQ.

Belongs to the type I cytokine receptor family. Type 1 subfamily. Interacts with SMARCA1. Interacts with NEK3 and VAV2 and this interaction is prolactin-dependent.

It localises to the membrane. In terms of biological role, this is a receptor for the anterior pituitary hormone prolactin. This Oryctolagus cuniculus (Rabbit) protein is Prolactin receptor (PRLR).